Here is a 570-residue protein sequence, read N- to C-terminus: Hydroxylamine reductase (570 aa).

Positions 5, 8, 17, and 23 each coordinate [4Fe-4S] cluster. Histidine 266, glutamate 290, cysteine 334, cysteine 425, cysteine 453, cysteine 478, glutamate 513, and lysine 515 together coordinate hybrid [4Fe-2O-2S] cluster. A Cysteine persulfide modification is found at cysteine 425.

The protein belongs to the HCP family. [4Fe-4S] cluster serves as cofactor. It depends on hybrid [4Fe-2O-2S] cluster as a cofactor.

The protein localises to the cytoplasm. It carries out the reaction A + NH4(+) + H2O = hydroxylamine + AH2 + H(+). Its function is as follows. Catalyzes the reduction of hydroxylamine to form NH(3) and H(2)O. In Clostridium botulinum (strain Loch Maree / Type A3), this protein is Hydroxylamine reductase.